The sequence spans 348 residues: Flagellar P-ring protein (348 aa).

The N-terminal stretch at 1–16 (MRVLTIFLLFMTSIFA) is a signal peptide.

The protein belongs to the FlgI family. As to quaternary structure, the basal body constitutes a major portion of the flagellar organelle and consists of four rings (L,P,S, and M) mounted on a central rod.

Its subcellular location is the periplasm. The protein localises to the bacterial flagellum basal body. In terms of biological role, assembles around the rod to form the L-ring and probably protects the motor/basal body from shearing forces during rotation. This Campylobacter jejuni subsp. jejuni serotype O:23/36 (strain 81-176) protein is Flagellar P-ring protein.